Reading from the N-terminus, the 450-residue chain is tRNA modification GTPase MnmE (450 aa).

Residues R25, E86, and R126 each contribute to the (6S)-5-formyl-5,6,7,8-tetrahydrofolate site. Residues 221-373 (GLRVALVGRP…LVQALLERCG (153 aa)) enclose the TrmE-type G domain. N231 serves as a coordination point for K(+). GTP-binding positions include 231-236 (NVGKSS), 250-256 (TDLPGTT), 275-278 (DTAG), and 336-339 (NKAD). S235 is a binding site for Mg(2+). 3 residues coordinate K(+): T250, L252, and T255. A Mg(2+)-binding site is contributed by T256. K450 is a (6S)-5-formyl-5,6,7,8-tetrahydrofolate binding site.

Belongs to the TRAFAC class TrmE-Era-EngA-EngB-Septin-like GTPase superfamily. TrmE GTPase family. As to quaternary structure, homodimer. Heterotetramer of two MnmE and two MnmG subunits. K(+) serves as cofactor.

The protein resides in the cytoplasm. In terms of biological role, exhibits a very high intrinsic GTPase hydrolysis rate. Involved in the addition of a carboxymethylaminomethyl (cmnm) group at the wobble position (U34) of certain tRNAs, forming tRNA-cmnm(5)s(2)U34. This Synechococcus sp. (strain CC9605) protein is tRNA modification GTPase MnmE.